Reading from the N-terminus, the 935-residue chain is Isoleucine--tRNA ligase (935 aa).

The 'HIGH' region motif lies at 58–68 (PYANGSIHVGH). Position 558 (glutamate 558) interacts with L-isoleucyl-5'-AMP. The 'KMSKS' region signature appears at 599–603 (KMSKS). An ATP-binding site is contributed by lysine 602. Zn(2+) is bound by residues cysteine 897, cysteine 900, cysteine 917, and cysteine 920.

It belongs to the class-I aminoacyl-tRNA synthetase family. IleS type 1 subfamily. As to quaternary structure, monomer. Zn(2+) is required as a cofactor.

It is found in the cytoplasm. It catalyses the reaction tRNA(Ile) + L-isoleucine + ATP = L-isoleucyl-tRNA(Ile) + AMP + diphosphate. Functionally, catalyzes the attachment of isoleucine to tRNA(Ile). As IleRS can inadvertently accommodate and process structurally similar amino acids such as valine, to avoid such errors it has two additional distinct tRNA(Ile)-dependent editing activities. One activity is designated as 'pretransfer' editing and involves the hydrolysis of activated Val-AMP. The other activity is designated 'posttransfer' editing and involves deacylation of mischarged Val-tRNA(Ile). In Francisella tularensis subsp. mediasiatica (strain FSC147), this protein is Isoleucine--tRNA ligase.